Consider the following 480-residue polypeptide: Cysteine--tRNA ligase (480 aa).

Cys-29 is a binding site for Zn(2+). A 'HIGH' region motif is present at residues 31–41 (PTVYSDPHLGH). Residues Cys-220, His-245, and Glu-249 each coordinate Zn(2+). The short motif at 276–280 (KMAKS) is the 'KMSKS' region element. Lys-279 contacts ATP.

This sequence belongs to the class-I aminoacyl-tRNA synthetase family. As to quaternary structure, monomer. Zn(2+) is required as a cofactor.

The protein localises to the cytoplasm. The enzyme catalyses tRNA(Cys) + L-cysteine + ATP = L-cysteinyl-tRNA(Cys) + AMP + diphosphate. The sequence is that of Cysteine--tRNA ligase from Thermus thermophilus (strain ATCC BAA-163 / DSM 7039 / HB27).